We begin with the raw amino-acid sequence, 90 residues long: Probable Fe(2+)-trafficking protein (90 aa).

The protein belongs to the Fe(2+)-trafficking protein family. As to quaternary structure, monomer.

Its function is as follows. Could be a mediator in iron transactions between iron acquisition and iron-requiring processes, such as synthesis and/or repair of Fe-S clusters in biosynthetic enzymes. This Yersinia pseudotuberculosis serotype O:1b (strain IP 31758) protein is Probable Fe(2+)-trafficking protein.